A 444-amino-acid chain; its full sequence is 23S rRNA (uracil(1939)-C(5))-methyltransferase RlmD (444 aa).

The TRAM domain occupies 5-67 (RNRLDRTPFQ…RHFDEAKTVG (63 aa)). Residues Cys80, Cys86, Cys89, and Cys168 each coordinate [4Fe-4S] cluster. S-adenosyl-L-methionine contacts are provided by Gln276, Phe305, Asn310, Glu326, Asp353, and Asp374. Cys400 (nucleophile) is an active-site residue.

This sequence belongs to the class I-like SAM-binding methyltransferase superfamily. RNA M5U methyltransferase family. RlmD subfamily.

The catalysed reaction is uridine(1939) in 23S rRNA + S-adenosyl-L-methionine = 5-methyluridine(1939) in 23S rRNA + S-adenosyl-L-homocysteine + H(+). Its function is as follows. Catalyzes the formation of 5-methyl-uridine at position 1939 (m5U1939) in 23S rRNA. The protein is 23S rRNA (uracil(1939)-C(5))-methyltransferase RlmD of Xanthomonas axonopodis pv. citri (strain 306).